Consider the following 366-residue polypeptide: MLEKRYLVLEDGSYYEGYRLGSDDLSIGEIVFNTAMTGYQETISDPSYTGQIITFTYPLIGNYGINRDDFESLTPKLNGVVVKEASTHPSNFRHQKTLHETLAQYHIPGISGVDTRSITRKIRNHGVLRAGFTDNKDNIQELVEQLKTAELPRDEVQTVSTKTPYVSTGSDLSVVLLDFGKKQNIVRELNLRGCNVTVVPYDTSAEEILSMSPDGVMLSNGPGDPDEVDVALDMIRGILGKIPFFGICLGHQLFALSQGATSFKMKFGHRGANHPVKDLRTGKIDITSQNHGYSIDRDSLKNTDLEVTHIALNDGTVEGLRHKELPAFSVQYHPEARPGPSDSNYLFDEFITMMKDFKEKERQINA.

Residues Met-1–Asp-171 form a CPSase region. L-glutamine-binding residues include Ser-47, Gly-221, and Gly-223. The 188-residue stretch at Ser-173–Lys-360 folds into the Glutamine amidotransferase type-1 domain. The active-site Nucleophile is the Cys-248. Residues Leu-249, Gln-252, Asn-290, Gly-292, and Tyr-293 each contribute to the L-glutamine site. Active-site residues include His-333 and Glu-335.

The protein belongs to the CarA family. In terms of assembly, composed of two chains; the small (or glutamine) chain promotes the hydrolysis of glutamine to ammonia, which is used by the large (or ammonia) chain to synthesize carbamoyl phosphate. Tetramer of heterodimers (alpha,beta)4.

It carries out the reaction hydrogencarbonate + L-glutamine + 2 ATP + H2O = carbamoyl phosphate + L-glutamate + 2 ADP + phosphate + 2 H(+). The enzyme catalyses L-glutamine + H2O = L-glutamate + NH4(+). The protein operates within amino-acid biosynthesis; L-arginine biosynthesis; carbamoyl phosphate from bicarbonate: step 1/1. Its pathway is pyrimidine metabolism; UMP biosynthesis via de novo pathway; (S)-dihydroorotate from bicarbonate: step 1/3. Its function is as follows. Small subunit of the glutamine-dependent carbamoyl phosphate synthetase (CPSase). CPSase catalyzes the formation of carbamoyl phosphate from the ammonia moiety of glutamine, carbonate, and phosphate donated by ATP, constituting the first step of 2 biosynthetic pathways, one leading to arginine and/or urea and the other to pyrimidine nucleotides. The small subunit (glutamine amidotransferase) binds and cleaves glutamine to supply the large subunit with the substrate ammonia. This is Carbamoyl phosphate synthase small chain from Staphylococcus epidermidis (strain ATCC 35984 / DSM 28319 / BCRC 17069 / CCUG 31568 / BM 3577 / RP62A).